The following is a 144-amino-acid chain: 3-dehydroquinate dehydratase (144 aa).

Residue Tyr-22 is the Proton acceptor of the active site. Residues Asn-71, His-77, and Asp-84 each contribute to the substrate site. Residue His-97 is the Proton donor of the active site. Residues 98-99 (IS) and Arg-108 contribute to the substrate site.

This sequence belongs to the type-II 3-dehydroquinase family. In terms of assembly, homododecamer.

It catalyses the reaction 3-dehydroquinate = 3-dehydroshikimate + H2O. It participates in metabolic intermediate biosynthesis; chorismate biosynthesis; chorismate from D-erythrose 4-phosphate and phosphoenolpyruvate: step 3/7. Its function is as follows. Catalyzes a trans-dehydration via an enolate intermediate. In Thermotoga maritima (strain ATCC 43589 / DSM 3109 / JCM 10099 / NBRC 100826 / MSB8), this protein is 3-dehydroquinate dehydratase (aroQ).